A 494-amino-acid polypeptide reads, in one-letter code: Solute carrier family 2, facilitated glucose transporter member 3 (494 aa).

The Cytoplasmic portion of the chain corresponds to 1–10 (MGTTKVTTPL). Residues 11-32 (IFAISIATIGSFQFGYNTGVIN) traverse the membrane as a helical segment. Over 33–64 (APEAIIKDFLNYTLEERSETPPSSVLLTSLWS) the chain is Extracellular. An N-linked (GlcNAc...) asparagine glycan is attached at N43. The helical transmembrane segment at 65-85 (LSVAIFSVGGMIGSFSVGLFV) threads the bilayer. Residues 86-90 (NRFGR) lie on the Cytoplasmic side of the membrane. Residues 91–111 (RNSMLIVNLLAIAGGCLMGFC) traverse the membrane as a helical segment. Residues 112–118 (KIAESVE) are Extracellular-facing. The helical transmembrane segment at 119-142 (MLILGRLIIGLFCGLCTGFVPMYI) threads the bilayer. Topologically, residues 143-153 (GEISPTALRGA) are cytoplasmic. A helical transmembrane segment spans residues 154–174 (FGTLNQLGIVIGILVAQIFGL). Q159 contributes to the D-glucose binding site. Topologically, residues 175 to 183 (KVILGTEDL) are extracellular. The chain crosses the membrane as a helical span at residues 184 to 204 (WPLLLGFTILPAIIQCAALPF). Residues 205-269 (CPESPRFLLI…LFRAPNYRQP (65 aa)) lie on the Cytoplasmic side of the membrane. T232 carries the phosphothreonine modification. The helical transmembrane segment at 270–290 (IIISIMLQLSQQLSGINAVFY) threads the bilayer. The important for selectivity against fructose stretch occupies residues 277–279 (QLS). D-glucose-binding positions include 280–281 (QQ) and N286. The Extracellular portion of the chain corresponds to 291–304 (YSTGIFKDAGVQEP). The chain crosses the membrane as a helical span at residues 305–325 (VYATIGAGVVNTIFTVVSVFL). N315 is a binding site for D-glucose. Topologically, residues 326 to 331 (VERAGR) are cytoplasmic. The helical transmembrane segment at 332-352 (RTLHLIGLGGMAFCSILMTIS) threads the bilayer. At 353–363 (LLLKDNYSWMS) the chain is on the extracellular side. Residues 364–389 (FICIGAILVFVAFFEIGPGPIPWFIV) form a helical membrane-spanning segment. The D-glucose site is built by E378 and W386. Residues 390-399 (AELFGQGPRP) lie on the Cytoplasmic side of the membrane. Residues 400 to 420 (AAMAVAGCSNWTSNFLVGLLF) form a helical membrane-spanning segment. The Extracellular portion of the chain corresponds to 421-429 (PSATFYLGA). The helical transmembrane segment at 430–450 (YVFIVFTVFLVIFWVFTFFKV) threads the bilayer. Residues 451-494 (PETRGRTFEEITRAFEGQVQTGTRGEKGPIMEMNSIQPTKDTNA) lie on the Cytoplasmic side of the membrane. The segment at 473–494 (TRGEKGPIMEMNSIQPTKDTNA) is disordered. The segment covering 484-494 (NSIQPTKDTNA) has biased composition (polar residues). At S485 the chain carries Phosphoserine. The residue at position 492 (T492) is a Phosphothreonine.

It belongs to the major facilitator superfamily. Sugar transporter (TC 2.A.1.1) family. Glucose transporter subfamily. Interacts with SMIM43; the interaction may promote SLC2A3-mediated glucose transport to meet the energy needs of mesendoderm differentiation. In terms of tissue distribution, detected in placenta.

The protein resides in the cell membrane. It localises to the perikaryon. Its subcellular location is the cell projection. The enzyme catalyses D-glucose(out) = D-glucose(in). The catalysed reaction is D-galactose(in) = D-galactose(out). Deoxyglucose transport is inhibited by D-glucose, D-galactose and maltose. Galactose transport is inhibited by D-glucose and maltose. Facilitative glucose transporter. Can also mediate the uptake of various other monosaccharides across the cell membrane. Mediates the uptake of glucose, 2-deoxyglucose, galactose, mannose, xylose and fucose, and probably also dehydroascorbate. Does not mediate fructose transport. Required for mesendoderm differentiation. The polypeptide is Solute carrier family 2, facilitated glucose transporter member 3 (Ovis aries (Sheep)).